Reading from the N-terminus, the 156-residue chain is Low molecular weight phosphotyrosine protein phosphatase (156 aa).

The active-site Nucleophile is the cysteine 11. Arginine 17 is a catalytic residue. The active-site Proton donor is aspartate 128.

Belongs to the low molecular weight phosphotyrosine protein phosphatase family.

Its subcellular location is the cytoplasm. It catalyses the reaction O-phospho-L-tyrosyl-[protein] + H2O = L-tyrosyl-[protein] + phosphate. It carries out the reaction a phosphate monoester + H2O = an alcohol + phosphate. May contribute to dephosphorylation of 'Tyr-15' of cdc2. The chain is Low molecular weight phosphotyrosine protein phosphatase (stp1) from Schizosaccharomyces pombe (strain 972 / ATCC 24843) (Fission yeast).